The following is a 197-amino-acid chain: Glycerol-3-phosphate acyltransferase (197 aa).

A run of 6 helical transmembrane segments spans residues 1 to 21 (MNIL…GFLI), 50 to 70 (WPAL…VKIA), 77 to 97 (GLIE…PIWL), 111 to 131 (MFLA…LIVL), 137 to 157 (VSLS…FYLG), and 158 to 178 (KFMH…IWKH).

This sequence belongs to the PlsY family. In terms of assembly, probably interacts with PlsX.

Its subcellular location is the cell inner membrane. The enzyme catalyses an acyl phosphate + sn-glycerol 3-phosphate = a 1-acyl-sn-glycero-3-phosphate + phosphate. The protein operates within lipid metabolism; phospholipid metabolism. Functionally, catalyzes the transfer of an acyl group from acyl-phosphate (acyl-PO(4)) to glycerol-3-phosphate (G3P) to form lysophosphatidic acid (LPA). This enzyme utilizes acyl-phosphate as fatty acyl donor, but not acyl-CoA or acyl-ACP. The protein is Glycerol-3-phosphate acyltransferase of Prochlorococcus marinus (strain MIT 9301).